We begin with the raw amino-acid sequence, 453 residues long: MNISPQYLWNQVLERLQIRLTRPAFETWIQDATVQEWKDNCLVIQVANSFILNHLQKTYQPIIAQEVASVVGYPVDIQLTTAEGETMAMTGEAQSYQEKSLTQIAPESPKLNQLNPRYTFSRFVVGPTNRMAHAASLAVAESPGREFNPLFLCGGVGLGKTHLMQAIAHYRLELYPNAKVFYVSTEQFTNDLIAAIRQDSMERFREHYRRADFLLIDDIQFIEGKEYTQEELFHTFNTLHEAGKQVVLASDRAPKRIPTLQDRLISRFSMGLIADIQVPDLETRMAILQKKAQYENMRLPRDVVEYIATNYTSNIRELEGALIRAIAYTSISGLSMTVQNIAPVLNPPVEQVPASPEVILRTVAESLKVSIEDLKGSSRRREISFARQVGMYLMRQHTELSLPRIGEEFGGKDHTTVLYSCDKISKLQQKDWELSQMLSELSDRINMASRTQS.

The interval 1 to 73 (MNISPQYLWN…AQEVASVVGY (73 aa)) is domain I, interacts with DnaA modulators. Positions 73–112 (YPVDIQLTTAEGETMAMTGEAQSYQEKSLTQIAPESPKLN) are domain II. A domain III, AAA+ region region spans residues 113–329 (QLNPRYTFSR…GALIRAIAYT (217 aa)). The ATP site is built by glycine 157, glycine 159, lysine 160, and threonine 161. The tract at residues 330–453 (SISGLSMTVQ…RINMASRTQS (124 aa)) is domain IV, binds dsDNA.

It belongs to the DnaA family. In terms of assembly, oligomerizes as a right-handed, spiral filament on DNA at oriC.

The protein resides in the cytoplasm. Its function is as follows. Plays an essential role in the initiation and regulation of chromosomal replication. ATP-DnaA binds to the origin of replication (oriC) to initiate formation of the DNA replication initiation complex once per cell cycle. Binds the DnaA box (a 9 base pair repeat at the origin) and separates the double-stranded (ds)DNA. Forms a right-handed helical filament on oriC DNA; dsDNA binds to the exterior of the filament while single-stranded (ss)DNA is stabiized in the filament's interior. The ATP-DnaA-oriC complex binds and stabilizes one strand of the AT-rich DNA unwinding element (DUE), permitting loading of DNA polymerase. After initiation quickly degrades to an ADP-DnaA complex that is not apt for DNA replication. Binds acidic phospholipids. The polypeptide is Chromosomal replication initiator protein DnaA (Rippkaea orientalis (strain PCC 8801 / RF-1) (Cyanothece sp. (strain PCC 8801))).